Consider the following 212-residue polypeptide: Ribonuclease HII (212 aa).

The RNase H type-2 domain occupies 1–206 (MILVGIDEAG…LQDIAPNYYI (206 aa)). A divalent metal cation-binding residues include Asp-7, Glu-8, and Asp-104.

Belongs to the RNase HII family. It depends on Mn(2+) as a cofactor. Mg(2+) serves as cofactor.

The protein resides in the cytoplasm. It carries out the reaction Endonucleolytic cleavage to 5'-phosphomonoester.. In terms of biological role, endonuclease that specifically degrades the RNA of RNA-DNA hybrids. The sequence is that of Ribonuclease HII from Sulfolobus acidocaldarius (strain ATCC 33909 / DSM 639 / JCM 8929 / NBRC 15157 / NCIMB 11770).